The chain runs to 1138 residues: Nuclear pore complex-interacting protein family member B4 (1138 aa).

The chain crosses the membrane as a helical span at residues 63–87 (VIIAFPTSYKVVITLWIVYLWVSLL). 3 disordered regions span residues 241–263 (NRMG…SLSL), 291–620 (TPLP…NIKT), and 873–1138 (ERLR…RRLS). Over residues 252–262 (QQHSITDNSLS) the composition is skewed to polar residues. Positions 349-359 (PLPPSALPSAP) are enriched in pro residues. Basic and acidic residues-rich tracts occupy residues 406–416 (DNIKTPAERLR), 448–458 (DNIKTPAERLR), 490–500 (DNIKTPAERLR), 532–542 (DNIKTPAERLR), 574–584 (DNIKTPAERLR), 908–918 (DNIKTPAERLR), 950–960 (DNIKTPAERLR), and 992–1002 (DNIKTPAERLR).

This sequence belongs to the NPIP family.

The protein resides in the membrane. This chain is Nuclear pore complex-interacting protein family member B4 (NPIPB4), found in Homo sapiens (Human).